A 360-amino-acid polypeptide reads, in one-letter code: Phosphoserine aminotransferase (360 aa).

R42 contacts L-glutamate. W102, T152, D171, and Q194 together coordinate pyridoxal 5'-phosphate. An N6-(pyridoxal phosphate)lysine modification is found at K195. A pyridoxal 5'-phosphate-binding site is contributed by 237–238; sequence NT.

This sequence belongs to the class-V pyridoxal-phosphate-dependent aminotransferase family. SerC subfamily. As to quaternary structure, homodimer. Requires pyridoxal 5'-phosphate as cofactor.

The protein resides in the cytoplasm. The enzyme catalyses O-phospho-L-serine + 2-oxoglutarate = 3-phosphooxypyruvate + L-glutamate. It catalyses the reaction 4-(phosphooxy)-L-threonine + 2-oxoglutarate = (R)-3-hydroxy-2-oxo-4-phosphooxybutanoate + L-glutamate. Its pathway is amino-acid biosynthesis; L-serine biosynthesis; L-serine from 3-phospho-D-glycerate: step 2/3. It functions in the pathway cofactor biosynthesis; pyridoxine 5'-phosphate biosynthesis; pyridoxine 5'-phosphate from D-erythrose 4-phosphate: step 3/5. Catalyzes the reversible conversion of 3-phosphohydroxypyruvate to phosphoserine and of 3-hydroxy-2-oxo-4-phosphonooxybutanoate to phosphohydroxythreonine. This is Phosphoserine aminotransferase from Coxiella burnetii (strain RSA 493 / Nine Mile phase I).